A 605-amino-acid chain; its full sequence is FAD-linked oxidoreductase easE (605 aa).

The signal sequence occupies residues 1-20 (MRHFVTFVVGFLLSWGFLSS). 2 N-linked (GlcNAc...) asparagine glycosylation sites follow: N46 and N105. Residues 122-307 (CHQGRLPLYS…TQATVRAFPD (186 aa)) enclose the FAD-binding PCMH-type domain. N-linked (GlcNAc...) asparagine glycosylation is present at N370.

This sequence belongs to the oxygen-dependent FAD-linked oxidoreductase family. Requires FAD as cofactor.

It participates in alkaloid biosynthesis; ergot alkaloid biosynthesis. FAD-linked oxidoreductase; part of the gene cluster that mediates the biosynthesis of fungal ergot alkaloid ergovaline, the predominant ergopeptine product in E.festucae var. lolii. DmaW catalyzes the first step of ergot alkaloid biosynthesis by condensing dimethylallyl diphosphate (DMAP) and tryptophan to form 4-dimethylallyl-L-tryptophan. The second step is catalyzed by the methyltransferase easF that methylates 4-dimethylallyl-L-tryptophan in the presence of S-adenosyl-L-methionine, resulting in the formation of 4-dimethylallyl-L-abrine. The catalase easC and the FAD-dependent oxidoreductase easE then transform 4-dimethylallyl-L-abrine to chanoclavine-I which is further oxidized by easD in the presence of NAD(+), resulting in the formation of chanoclavine-I aldehyde. Agroclavine dehydrogenase easG then mediates the conversion of chanoclavine-I aldehyde to agroclavine via a non-enzymatic adduct reaction: the substrate is an iminium intermediate that is formed spontaneously from chanoclavine-I aldehyde in the presence of glutathione. The presence of easA is not required to complete this reaction. Further conversion of agroclavine to paspalic acid is a two-step process involving oxidation of agroclavine to elymoclavine and of elymoclavine to paspalic acid, the second step being performed by the elymoclavine oxidase cloA. Paspalic acid is then further converted to D-lysergic acid. Ergovaline is assembled from D-lysergic acid and three different amino acids by the D-lysergyl-peptide-synthetase composed of a monomudular (lpsB) and a trimodular (lpsA) nonribosomal peptide synthetase subunit. The protein is FAD-linked oxidoreductase easE of Epichloe festucae var. lolii (Neotyphodium lolii).